A 76-amino-acid chain; its full sequence is LVIVFVVLLGVPLISANEEELLAILQDQRNDARGGCLNRYKSNICGTLVTPMNCITPRTRMGKFARKFCQFMCGIC.

An N-terminal signal peptide occupies residues 1–16; that stretch reads LVIVFVVLLGVPLISA. The propeptide occupies 17 to 33; that stretch reads NEEELLAILQDQRNDAR.

Belongs to the sea anemone 8 toxin family.

The protein resides in the secreted. The protein localises to the nematocyst. The chain is U-actitoxin-Avd8c from Anemonia viridis (Snakelocks anemone).